The following is a 310-amino-acid chain: Methionyl-tRNA formyltransferase (310 aa).

(6S)-5,6,7,8-tetrahydrofolate is bound at residue 106-109 (SLLP).

It belongs to the Fmt family.

It catalyses the reaction L-methionyl-tRNA(fMet) + (6R)-10-formyltetrahydrofolate = N-formyl-L-methionyl-tRNA(fMet) + (6S)-5,6,7,8-tetrahydrofolate + H(+). Attaches a formyl group to the free amino group of methionyl-tRNA(fMet). The formyl group appears to play a dual role in the initiator identity of N-formylmethionyl-tRNA by promoting its recognition by IF2 and preventing the misappropriation of this tRNA by the elongation apparatus. This chain is Methionyl-tRNA formyltransferase, found in Fervidobacterium nodosum (strain ATCC 35602 / DSM 5306 / Rt17-B1).